Here is a 713-residue protein sequence, read N- to C-terminus: Phosphoribosylformylglycinamidine synthase subunit PurL (713 aa).

The span at 1–17 (MSLSPSDRELVTEELGR) shows a compositional bias: basic and acidic residues. The tract at residues 1–20 (MSLSPSDRELVTEELGREPT) is disordered. Histidine 34 is an active-site residue. Tyrosine 37 contributes to the ATP binding site. A Mg(2+)-binding site is contributed by glutamate 85. Substrate is bound by residues 86–89 (SHNH) and arginine 108. The active-site Proton acceptor is histidine 87. Mg(2+) is bound at residue aspartate 109. Glutamine 233 lines the substrate pocket. A Mg(2+)-binding site is contributed by aspartate 261. Substrate is bound at residue 305–307 (ESQ). ATP is bound by residues aspartate 480 and glycine 517. Asparagine 518 provides a ligand contact to Mg(2+). Substrate is bound at residue serine 520.

The protein belongs to the FGAMS family. Monomer. Part of the FGAM synthase complex composed of 1 PurL, 1 PurQ and 2 PurS subunits.

The protein localises to the cytoplasm. The catalysed reaction is N(2)-formyl-N(1)-(5-phospho-beta-D-ribosyl)glycinamide + L-glutamine + ATP + H2O = 2-formamido-N(1)-(5-O-phospho-beta-D-ribosyl)acetamidine + L-glutamate + ADP + phosphate + H(+). It functions in the pathway purine metabolism; IMP biosynthesis via de novo pathway; 5-amino-1-(5-phospho-D-ribosyl)imidazole from N(2)-formyl-N(1)-(5-phospho-D-ribosyl)glycinamide: step 1/2. In terms of biological role, part of the phosphoribosylformylglycinamidine synthase complex involved in the purines biosynthetic pathway. Catalyzes the ATP-dependent conversion of formylglycinamide ribonucleotide (FGAR) and glutamine to yield formylglycinamidine ribonucleotide (FGAM) and glutamate. The FGAM synthase complex is composed of three subunits. PurQ produces an ammonia molecule by converting glutamine to glutamate. PurL transfers the ammonia molecule to FGAR to form FGAM in an ATP-dependent manner. PurS interacts with PurQ and PurL and is thought to assist in the transfer of the ammonia molecule from PurQ to PurL. In Natronomonas pharaonis (strain ATCC 35678 / DSM 2160 / CIP 103997 / JCM 8858 / NBRC 14720 / NCIMB 2260 / Gabara) (Halobacterium pharaonis), this protein is Phosphoribosylformylglycinamidine synthase subunit PurL.